Consider the following 143-residue polypeptide: Transcriptional regulator MraZ (143 aa).

SpoVT-AbrB domains lie at 5–47 (EYDH…TLDE) and 76–119 (AVEV…DRET).

It belongs to the MraZ family. Forms oligomers.

The protein resides in the cytoplasm. Its subcellular location is the nucleoid. The polypeptide is Transcriptional regulator MraZ (Staphylococcus aureus (strain Mu3 / ATCC 700698)).